Reading from the N-terminus, the 365-residue chain is Peptide chain release factor 2 (365 aa).

An N5-methylglutamine modification is found at glutamine 252.

The protein belongs to the prokaryotic/mitochondrial release factor family. Post-translationally, methylated by PrmC. Methylation increases the termination efficiency of RF2.

It localises to the cytoplasm. In terms of biological role, peptide chain release factor 2 directs the termination of translation in response to the peptide chain termination codons UGA and UAA. The polypeptide is Peptide chain release factor 2 (Escherichia coli (strain K12 / MC4100 / BW2952)).